Reading from the N-terminus, the 166-residue chain is Small ribosomal subunit protein uS5 (166 aa).

In terms of domain architecture, S5 DRBM spans 12–75 (YIEKLVQVNR…EAARRNMIQV (64 aa)).

It belongs to the universal ribosomal protein uS5 family. In terms of assembly, part of the 30S ribosomal subunit. Contacts proteins S4 and S8.

With S4 and S12 plays an important role in translational accuracy. Its function is as follows. Located at the back of the 30S subunit body where it stabilizes the conformation of the head with respect to the body. This is Small ribosomal subunit protein uS5 from Ectopseudomonas mendocina (strain ymp) (Pseudomonas mendocina).